A 168-amino-acid polypeptide reads, in one-letter code: MLTVSRLIPRGQGLAPVLRQRASTVELDWELRQKSRLSATDSAGRALGIFLPRGTRLRGGDMLVAEDGSLVRVLATPQPVLLISACPKHGSPFDLTRAAYHLGNRHVPIELQPDHLKIEPDPVLADMLRALHLIVQADNLPFEPEGGAYAAGQGGGHGPHGQHTHPHH.

Residues 145–168 (EGGAYAAGQGGGHGPHGQHTHPHH) are disordered.

This sequence belongs to the UreE family.

Its subcellular location is the cytoplasm. In terms of biological role, involved in urease metallocenter assembly. Binds nickel. Probably functions as a nickel donor during metallocenter assembly. This Verminephrobacter eiseniae (strain EF01-2) protein is Urease accessory protein UreE.